We begin with the raw amino-acid sequence, 100 residues long: Ubiquitin-related modifier 1 homolog (100 aa).

The residue at position 100 (glycine 100) is a 1-thioglycine. Residue glycine 100 forms a Glycyl lysine isopeptide (Gly-Lys) (interchain with K-? in acceptor proteins) linkage.

It belongs to the URM1 family. In terms of assembly, interacts with cer. Post-translationally, C-terminal thiocarboxylation occurs in 2 steps, it is first acyl-adenylated (-COAMP) via the hesA/moeB/thiF part of the MOCS3 homolog, then thiocarboxylated (-COSH) via the rhodanese domain of the MOCS3 homolog.

The protein resides in the cytoplasm. Its pathway is tRNA modification; 5-methoxycarbonylmethyl-2-thiouridine-tRNA biosynthesis. Acts as a sulfur carrier required for 2-thiolation of mcm(5)S(2)U at tRNA wobble positions of cytosolic tRNA(Lys), tRNA(Glu) and tRNA(Gln). Serves as sulfur donor in tRNA 2-thiolation reaction by being thiocarboxylated (-COSH) at its C-terminus by MOCS3. The sulfur is then transferred to tRNA to form 2-thiolation of mcm(5)S(2)U. Also acts as a ubiquitin-like protein (UBL) that is covalently conjugated via an isopeptide bond to lysine residues of target proteins such as Prx2/Jafrac1, Ciao1, Eip71CD and GILT1. The thiocarboxylated form serves as substrate for conjugation and oxidative stress specifically induces the formation of UBL-protein conjugates. This is Ubiquitin-related modifier 1 homolog from Drosophila willistoni (Fruit fly).